The chain runs to 484 residues: Protein nucleotidyltransferase YdiU (484 aa).

The ATP site is built by Gly-81, Gly-83, Arg-84, Lys-103, Asp-115, Gly-116, Arg-166, and Arg-173. Residue Asp-244 is the Proton acceptor of the active site. Mg(2+)-binding residues include Asn-245 and Asp-254. Asp-254 lines the ATP pocket.

The protein belongs to the SELO family. Mg(2+) serves as cofactor. The cofactor is Mn(2+).

The enzyme catalyses L-seryl-[protein] + ATP = 3-O-(5'-adenylyl)-L-seryl-[protein] + diphosphate. It carries out the reaction L-threonyl-[protein] + ATP = 3-O-(5'-adenylyl)-L-threonyl-[protein] + diphosphate. It catalyses the reaction L-tyrosyl-[protein] + ATP = O-(5'-adenylyl)-L-tyrosyl-[protein] + diphosphate. The catalysed reaction is L-histidyl-[protein] + UTP = N(tele)-(5'-uridylyl)-L-histidyl-[protein] + diphosphate. The enzyme catalyses L-seryl-[protein] + UTP = O-(5'-uridylyl)-L-seryl-[protein] + diphosphate. It carries out the reaction L-tyrosyl-[protein] + UTP = O-(5'-uridylyl)-L-tyrosyl-[protein] + diphosphate. Nucleotidyltransferase involved in the post-translational modification of proteins. It can catalyze the addition of adenosine monophosphate (AMP) or uridine monophosphate (UMP) to a protein, resulting in modifications known as AMPylation and UMPylation. The polypeptide is Protein nucleotidyltransferase YdiU (Shewanella baltica (strain OS185)).